The following is a 281-amino-acid chain: 2-dehydro-3-deoxyphosphooctonate aldolase (281 aa).

Belongs to the KdsA family.

It is found in the cytoplasm. It carries out the reaction D-arabinose 5-phosphate + phosphoenolpyruvate + H2O = 3-deoxy-alpha-D-manno-2-octulosonate-8-phosphate + phosphate. The protein operates within carbohydrate biosynthesis; 3-deoxy-D-manno-octulosonate biosynthesis; 3-deoxy-D-manno-octulosonate from D-ribulose 5-phosphate: step 2/3. It functions in the pathway bacterial outer membrane biogenesis; lipopolysaccharide biosynthesis. This is 2-dehydro-3-deoxyphosphooctonate aldolase from Pseudomonas fluorescens (strain SBW25).